The primary structure comprises 197 residues: 3-isopropylmalate dehydratase small subunit (197 aa).

Belongs to the LeuD family. LeuD type 1 subfamily. Heterodimer of LeuC and LeuD.

The catalysed reaction is (2R,3S)-3-isopropylmalate = (2S)-2-isopropylmalate. Its pathway is amino-acid biosynthesis; L-leucine biosynthesis; L-leucine from 3-methyl-2-oxobutanoate: step 2/4. Catalyzes the isomerization between 2-isopropylmalate and 3-isopropylmalate, via the formation of 2-isopropylmaleate. This Shouchella clausii (strain KSM-K16) (Alkalihalobacillus clausii) protein is 3-isopropylmalate dehydratase small subunit.